Consider the following 207-residue polypeptide: Ras-related protein Rab-8B (207 aa).

Serine 17, glycine 18, valine 19, glycine 20, lysine 21, threonine 22, cysteine 23, threonine 35, serine 39, and threonine 40 together coordinate GTP. Threonine 22 is a Mg(2+) binding site. 2 short sequence motifs (switch) span residues 31-45 and 63-80; these read DAFN…GIDF and DTAG…YYRG. Positions 40 and 63 each coordinate Mg(2+). Residue glycine 66 participates in GTP binding. Phosphothreonine; by LRRK2 is present on threonine 72. Residues asparagine 121, lysine 122, aspartate 124, alanine 152, and lysine 153 each coordinate GTP. Serine 180 carries the post-translational modification Phosphoserine. Cysteine methyl ester is present on cysteine 204. Cysteine 204 carries the S-geranylgeranyl cysteine lipid modification. A propeptide spans 205–207 (removed in mature form); sequence SLL.

The protein belongs to the small GTPase superfamily. Rab family. As to quaternary structure, associated with actin, delta-catenin and alpha and beta tubulins. Interacts with OTOF. Interacts with PEX5R. Interacts with RAB3IP. Interacts with VIM. Interacts with CDH1. Interacts with MICALL2. Interacts with GDI1, GDI2, CHML and CHM; phosphorylation at Thr-72 disrupts these interactions. Interacts with MICAL1. The cofactor is Mg(2+). Post-translationally, phosphorylation of Thr-72 in the switch II region by LRRK2 prevents the association of RAB regulatory proteins, including CHM, CHML and RAB GDP dissociation inhibitors GDI1 and GDI2.

The protein localises to the cell membrane. It localises to the cytoplasmic vesicle. Its subcellular location is the phagosome. It is found in the phagosome membrane. The protein resides in the endosome membrane. It carries out the reaction GTP + H2O = GDP + phosphate + H(+). Regulated by guanine nucleotide exchange factors (GEFs) including RAB3IP/RABIN8 which promotes the exchange of bound GDP for free GTP. Regulated by GTPase activating proteins (GAPs) which increase the GTP hydrolysis activity. Inhibited by GDP dissociation inhibitors (GDIs). Functionally, the small GTPases Rab are key regulators of intracellular membrane trafficking, from the formation of transport vesicles to their fusion with membranes. Rabs cycle between an inactive GDP-bound form and an active GTP-bound form that is able to recruit to membranes different sets of downstream effectors directly responsible for vesicle formation, movement, tethering and fusion. RAB8B may be involved in polarized vesicular trafficking and neurotransmitter release. May participate in cell junction dynamics in Sertoli cells. May also participate in the export of a subset of neosynthesized proteins through a Rab8-Rab10-Rab11-dependent endososomal export route. This chain is Ras-related protein Rab-8B, found in Homo sapiens (Human).